An 88-amino-acid polypeptide reads, in one-letter code: uncharacterized protein (88 aa).

This is an uncharacterized protein from Mycobacterium tuberculosis (strain CDC 1551 / Oshkosh).